The following is a 488-amino-acid chain: E3 ubiquitin-protein ligase TRIM39 (488 aa).

The RING-type zinc finger occupies 29 to 70 (CSVCLEYLKEPVIIECGHNFCKACITRWWEDLERDFPCPVCR). A B box-type zinc finger spans residues 102–143 (RDESLCSQHHEPLSLFCYEDQEAVCLICAISHTHRAHTVVPM). Positions 107, 110, 129, and 135 each coordinate Zn(2+). Positions 181 to 250 (ELKRLVESRR…AHLAAEVEGK (70 aa)) form a coiled coil. Interaction with CDKN1A stretches follow at residues 268–307 (KCEK…QLIA) and 359–488 (TSGR…TDWE). A B30.2/SPRY domain is found at 289–484 (SHFPRQYFAL…NAAPLTIRPP (196 aa)).

It belongs to the TRIM/RBCC family. Interacts with MOAP1. Interacts with CDKN1A. Autoubiquitinated.

Its subcellular location is the cytoplasm. It localises to the cytosol. The protein resides in the mitochondrion. The protein localises to the nucleus. It carries out the reaction S-ubiquitinyl-[E2 ubiquitin-conjugating enzyme]-L-cysteine + [acceptor protein]-L-lysine = [E2 ubiquitin-conjugating enzyme]-L-cysteine + N(6)-ubiquitinyl-[acceptor protein]-L-lysine.. Its pathway is protein modification; protein ubiquitination. Functionally, E3 ubiquitin-protein ligase. May facilitate apoptosis by inhibiting APC/C-Cdh1-mediated poly-ubiquitination and subsequent proteasome-mediated degradation of the pro-apoptotic protein MOAP1. Regulates the G1/S transition of the cell cycle and DNA damage-induced G2 arrest by stabilizing CDKN1A/p21. Positively regulates CDKN1A/p21 stability by competing with DTL for CDKN1A/p21 binding, therefore disrupting DCX(DTL) E3 ubiquitin ligase complex-mediated CDKN1A/p21 ubiquitination and degradation. The protein is E3 ubiquitin-protein ligase TRIM39 (Trim39) of Rattus norvegicus (Rat).